The primary structure comprises 153 residues: Deoxyuridine 5'-triphosphate nucleotidohydrolase (153 aa).

Residues 71–73 (RSG), asparagine 84, 88–90 (TID), and lysine 98 contribute to the substrate site.

Belongs to the dUTPase family. Requires Mg(2+) as cofactor.

The catalysed reaction is dUTP + H2O = dUMP + diphosphate + H(+). The protein operates within pyrimidine metabolism; dUMP biosynthesis; dUMP from dCTP (dUTP route): step 2/2. Functionally, this enzyme is involved in nucleotide metabolism: it produces dUMP, the immediate precursor of thymidine nucleotides and it decreases the intracellular concentration of dUTP so that uracil cannot be incorporated into DNA. In Ehrlichia canis (strain Jake), this protein is Deoxyuridine 5'-triphosphate nucleotidohydrolase.